A 366-amino-acid chain; its full sequence is MMEALAERLSALQDRILELYEADSKDLKDQIEHWKCVRQECAVLYKAREVGFSHLNHQVVPSLTVSRAKAHKAIEVQLALESLQNSEYNNEEWTLQDASLEMWHTEPKGCFKKTGVPVTVLFDCDKDNTMEYVLWGHIYVWGDNGWVKTFGEADNWGLHYTVAGEKVYYVQFYEDAKKYGHGNGNGDGYEWEVHVGGTVMHYSDSVSSATHCDKLPTVEIVSGLQHINPSPPPANPSAKENVWSSPAKRVRRSDSGGDPVRALDGKSRSVLCGSAHNNATGSSGDSDYTPIVHLKGESNCLKCLRFRLGKHKHLYINISSTWRWANHASEKAIVTVTFANELQRQQFLNTVKIPSTVTLSQGVMTV.

Residues 1-207 (MMEALAERLS…TVMHYSDSVS (207 aa)) form a transactivation domain region. Positions 224–261 (LQHINPSPPPANPSAKENVWSSPAKRVRRSDSGGDPVR) are disordered. The interval 289–366 (TPIVHLKGES…VTLSQGVMTV (78 aa)) is DNA-binding domain. Residue Lys-295 forms a Glycyl lysine isopeptide (Lys-Gly) (interchain with G-Cter in SUMO) linkage.

It belongs to the papillomaviridae E2 protein family. In terms of assembly, binds DNA as homodimer. Interacts with protein E1; this interaction greatly increases E1 DNA-binding activity. Interacts with protein L1; this interaction enhances E2-dependent replication and transcription activation. Interacts with protein L2; this interaction inhibits E2 transcriptional activity but not DNA replication function E2. Interacts with protein E7; this interaction inhibits E7 oncogenic activity. Interacts with host TAF1; this interaction modulates E2-dependent transcriptional regulation. Interacts with host BRD4; this interaction mediates E2 transcriptional activation function. Additionally, the interaction with host BRD4 on mitotic chromosomes mediates tethering of the viral genome. Interacts with host TOPBP1; this interaction is required for optimal viral DNA replication. Phosphorylated. Post-translationally, sumoylation plays a regulatory role in E2 transcriptional activity.

The protein localises to the host nucleus. Its function is as follows. Plays a role in the initiation of viral DNA replication. A dimer of E2 interacts with a dimer of E1 in order to improve specificity of E1 DNA binding activity. Once the complex recognizes and binds DNA at specific sites, the E2 dimer is removed from DNA. E2 also regulates viral transcription through binding to the E2RE response element (5'-ACCNNNNNNGGT-3') present in multiple copies in the regulatory regions of the viral genome. Activates or represses transcription depending on E2RE's position with regards to proximal promoter elements including the TATA-box. Repression occurs by sterically hindering the assembly of the transcription initiation complex. The polypeptide is Regulatory protein E2 (Macaca mulatta (Rhesus macaque)).